We begin with the raw amino-acid sequence, 1252 residues long: Myosin-1 (1252 aa).

Positions 1 to 27 are disordered; that stretch reads MAPSKKAGKKVTPASKKSAGQGKVAKA. The Myosin motor domain maps to 38–712; the sequence is VGVSDMTLLT…TLFALETMRD (675 aa). 128–135 lines the ATP pocket; it reads GESGAGKT. Ser356 is modified (phosphoserine). The actin-binding stretch occupies residues 403–485; the sequence is IIGILDIFGF…PGIFAALNDA (83 aa). IQ domains are found at residues 716–736 and 737–762; these read HNMA…KHEC and ARRI…YGHQ. A TH1 domain is found at 770–953; that stretch reads RRRFSLLSYR…TVHVASGEPP (184 aa). 2 disordered regions span residues 945–1049 and 1103–1228; these read VHVA…PETP and PPKA…PATA. 2 stretches are compositionally biased toward pro residues: residues 989-999 and 1028-1046; these read RSVPKPKPVAQ and RPPP…PAKP. The SH3 domain occupies 1046–1104; the sequence is PETPMYRAKFAFEGQEGEMSLKKDDVVELVEKDDNGWWLVKMDGVEGWAPNNYLELVPP. Polar residues predominate over residues 1162-1175; that stretch reads ADTTPASSRPSSAI. Pro residues predominate over residues 1178-1193; it reads KPPPPVAAKPKPPVIP. Low complexity predominate over residues 1194–1203; sequence VKPSVSAKGP. Over residues 1204-1215 the composition is skewed to pro residues; the sequence is AKPPIPTAPRPP. Residues 1216–1228 show a composition bias toward low complexity; sequence AASTSRSSKPATA.

It belongs to the TRAFAC class myosin-kinesin ATPase superfamily. Myosin family. In terms of processing, phosphorylation of the TEDS site (Ser-356) is required for the polarization of the actin cytoskeleton. Phosphorylation probably activates the myosin-I ATPase activity.

It localises to the cytoplasm. It is found in the cytoskeleton. The protein localises to the actin patch. In terms of biological role, type-I myosin implicated in the organization of the actin cytoskeleton. Required for proper actin cytoskeleton polarization. At the cell cortex, assembles in patch-like structures together with proteins from the actin-polymerizing machinery and promotes actin assembly. Functions as actin nucleation-promoting factor (NPF) for the Arp2/3 complex. This chain is Myosin-1 (MYO1), found in Laccaria bicolor (strain S238N-H82 / ATCC MYA-4686) (Bicoloured deceiver).